We begin with the raw amino-acid sequence, 587 residues long: Protein POF1B (587 aa).

Residues 331–529 (STFSNIREEL…EELSKLRQEI (199 aa)) are a coiled coil.

Interacts with nonmuscle actin. In terms of tissue distribution, expression absent in adult ovary.

The protein resides in the cell junction. It localises to the tight junction. Its function is as follows. Plays a key role in the organization of epithelial monolayers by regulating the actin cytoskeleton. May be involved in ovary development. The sequence is that of Protein POF1B (Pof1b) from Mus musculus (Mouse).